Here is a 745-residue protein sequence, read N- to C-terminus: uncharacterized protein (745 aa).

The HTH araC/xylS-type domain occupies 158–256; it reads NQVCDYIELH…HQTPKQYRGD (99 aa). DNA-binding regions (H-T-H motif) lie at residues 175–196 and 223–246; these read SELSEYVGWSESHLSKKFTESL and ITDIALQNGFSSAASFARTFKHFT.

This is an uncharacterized protein from Staphylococcus aureus (strain Mu50 / ATCC 700699).